The primary structure comprises 783 residues: Lon protease (783 aa).

Residues 16–210 (LPLLASRGVV…KLLEIIKDEI (195 aa)) form the Lon N-terminal domain. 361–368 (GAPGVGKT) provides a ligand contact to ATP. A Lon proteolytic domain is found at 597-778 (KDRVGVATGM…DQVLDLILGG (182 aa)). Active-site residues include serine 684 and lysine 727.

The protein belongs to the peptidase S16 family. In terms of assembly, homohexamer. Organized in a ring with a central cavity.

It is found in the cytoplasm. It carries out the reaction Hydrolysis of proteins in presence of ATP.. In terms of biological role, ATP-dependent serine protease that mediates the selective degradation of mutant and abnormal proteins as well as certain short-lived regulatory proteins. Required for cellular homeostasis and for survival from DNA damage and developmental changes induced by stress. Degrades polypeptides processively to yield small peptide fragments that are 5 to 10 amino acids long. Binds to DNA in a double-stranded, site-specific manner. This is Lon protease from Halothermothrix orenii (strain H 168 / OCM 544 / DSM 9562).